Here is a 264-residue protein sequence, read N- to C-terminus: 3-methyl-2-oxobutanoate hydroxymethyltransferase (264 aa).

Mg(2+) is bound by residues aspartate 45 and aspartate 84. 3-methyl-2-oxobutanoate-binding positions include 45 to 46 (DS), aspartate 84, and lysine 112. Mg(2+) is bound at residue glutamate 114. The active-site Proton acceptor is glutamate 181.

It belongs to the PanB family. As to quaternary structure, homodecamer; pentamer of dimers. The cofactor is Mg(2+).

Its subcellular location is the cytoplasm. It catalyses the reaction 3-methyl-2-oxobutanoate + (6R)-5,10-methylene-5,6,7,8-tetrahydrofolate + H2O = 2-dehydropantoate + (6S)-5,6,7,8-tetrahydrofolate. It functions in the pathway cofactor biosynthesis; (R)-pantothenate biosynthesis; (R)-pantoate from 3-methyl-2-oxobutanoate: step 1/2. Functionally, catalyzes the reversible reaction in which hydroxymethyl group from 5,10-methylenetetrahydrofolate is transferred onto alpha-ketoisovalerate to form ketopantoate. The chain is 3-methyl-2-oxobutanoate hydroxymethyltransferase from Psychromonas ingrahamii (strain DSM 17664 / CCUG 51855 / 37).